The chain runs to 353 residues: UPF0283 membrane protein YcjF (353 aa).

3 helical membrane passes run 70 to 90 (MVMG…VQWT), 100 to 120 (VALG…GSVV), and 213 to 233 (ESTL…FIAW).

This sequence belongs to the UPF0283 family.

It localises to the cell inner membrane. This Shigella sonnei (strain Ss046) protein is UPF0283 membrane protein YcjF.